We begin with the raw amino-acid sequence, 325 residues long: Aldo-keto reductase family 1 member D1 (325 aa).

Residues 22-26 and D52 contribute to the NADP(+) site; that span reads GLGTY. Substrate is bound at residue Y26. The substrate site is built by Y57, W88, E119, and Y131. Y57 (proton donor) is an active-site residue. NADP(+)-binding positions include 168–169, Q192, and 218–223; these read SN and HSPLGT. S228 carries the post-translational modification Phosphoserine. W229 provides a ligand contact to substrate. 272 to 282 contacts NADP(+); sequence KSFTPERIKEN.

It belongs to the aldo/keto reductase family.

Its subcellular location is the cytoplasm. The catalysed reaction is 5beta-cholestan-3-one + NADP(+) = cholest-4-en-3-one + NADPH + H(+). It carries out the reaction 4,5beta-dihydrocortisone + NADP(+) = cortisone + NADPH + H(+). The enzyme catalyses cortisol + NADPH + H(+) = 5beta-dihydrocortisol + NADP(+). It catalyses the reaction corticosterone + NADPH + H(+) = 5beta-dihydrocorticosterone + NADP(+). The catalysed reaction is 7alpha,12alpha-dihydroxycholest-4-en-3-one + NADPH + H(+) = 7alpha,12alpha-dihydroxy-5beta-cholestan-3-one + NADP(+). It carries out the reaction 7alpha-hydroxycholest-4-en-3-one + NADPH + H(+) = 7alpha-hydroxy-5beta-cholestan-3-one + NADP(+). The enzyme catalyses epitestosterone + NADPH + H(+) = 5beta-dihydroepitestosterone + NADP(+). It catalyses the reaction androst-4-ene-3,17-dione + NADPH + H(+) = 5beta-androstane-3,17-dione + NADP(+). The catalysed reaction is progesterone + NADPH + H(+) = 5beta-pregnan-3,20-dione + NADP(+). It carries out the reaction 21-hydroxyprogesterone + NADPH + H(+) = 5beta-dihydrodeoxycorticosterone + NADP(+). The enzyme catalyses aldosterone + NADPH + H(+) = 5beta-dihydroaldosterone + NADP(+). It catalyses the reaction 17beta-hydroxyandrosta-1,4-dien-3-one + NADPH + H(+) = 17beta-hydroxy-5beta-androst-1-en-3-one + NADP(+). The catalysed reaction is 17beta-hydroxyestr-4-en-3-one + NADPH + H(+) = 17beta-hydroxy-5beta-estran-3-one + NADP(+). It carries out the reaction 5beta-dihydrotestosterone + NADP(+) = testosterone + NADPH + H(+). The enzyme catalyses androst-4-ene-3,11,17-trione + NADPH + H(+) = 17beta-hydroxyandrost-4-ene-3,11-dione + NADP(+). With respect to regulation, subject to inhibition by high substrate concentrations. Inhibited by testosterone concentrations above 10 uM. Inhibited by the primary and secondary bile acids chenodeoxycholic acid and ursodeoxycholic acid. Functionally, catalyzes the stereospecific NADPH-dependent reduction of the C4-C5 double bond of bile acid intermediates and steroid hormones carrying a delta(4)-3-one structure to yield an A/B cis-ring junction. This cis-configuration is crucial for bile acid biosynthesis and plays important roles in steroid metabolism. Capable of reducing a broad range of delta-(4)-3-ketosteroids from C18 (such as, 17beta-hydroxyestr-4-en-3-one) to C27 (such as, 7alpha-hydroxycholest-4-en-3-one). The protein is Aldo-keto reductase family 1 member D1 (Akr1d1) of Mus musculus (Mouse).